The primary structure comprises 149 residues: Calmodulin (149 aa).

Alanine 2 bears the N-acetylalanine mark. EF-hand domains lie at 8 to 43, 44 to 79, 81 to 116, and 117 to 149; these read EQIAEFKEAFSLFDKDGDGTITTKELGTVMRSLGQN, PTEAELQDMINEVDADGNGTIDFPEFLTMMARKMKD, DSEEEIREAFRVFDKDGNGYISAAELRHVMTNLGEK, and LTDEEVDEMIREADIDGDGQVNYEEFVQIMTAK. Residues aspartate 21, aspartate 23, aspartate 25, threonine 27, glutamate 32, aspartate 57, aspartate 59, asparagine 61, threonine 63, glutamate 68, aspartate 94, aspartate 96, asparagine 98, tyrosine 100, and glutamate 105 each coordinate Ca(2+). At lysine 116 the chain carries N6,N6,N6-trimethyllysine. Aspartate 130, aspartate 132, aspartate 134, glutamine 136, and glutamate 141 together coordinate Ca(2+).

This sequence belongs to the calmodulin family.

In terms of biological role, calmodulin acts as part of a calcium signal transduction pathway by mediating the control of a large number of enzymes, ion channels, aquaporins and other proteins through calcium-binding. Calcium-binding is required for the activation of calmodulin. Among the enzymes to be stimulated by the calmodulin-calcium complex are a number of protein kinases, such as myosin light-chain kinases and calmodulin-dependent protein kinase type II (CaMK2), and phosphatases. The sequence is that of Calmodulin (calm) from Epinephelus akaara (Hong Kong grouper).